A 65-amino-acid chain; its full sequence is Large ribosomal subunit protein bL33 (65 aa).

The segment at Ala-20 to Thr-42 is disordered.

The protein belongs to the bacterial ribosomal protein bL33 family.

This Prochlorococcus marinus (strain SARG / CCMP1375 / SS120) protein is Large ribosomal subunit protein bL33.